We begin with the raw amino-acid sequence, 519 residues long: Cytosol aminopeptidase (519 aa).

Ser42 bears the Phosphoserine mark. Position 45 is an N6-succinyllysine (Lys45). Ser54 bears the Phosphoserine mark. An N6-succinyllysine mark is found at Lys61 and Lys103. Phosphoserine is present on residues Ser180 and Ser194. Residues Leu202, Met203, and Thr205 each coordinate Zn(2+). N6-acetyllysine; alternate is present on Lys221. Lys221 is modified (N6-succinyllysine; alternate). Ser238 is subject to Phosphoserine. Positions 282 and 287 each coordinate Zn(2+). 4 residues coordinate substrate: Lys282, Asp287, Ser292, and Lys294. Residue Asp287 participates in Mg(2+) binding. The active site involves Lys294. Residues Arg303, Asp305, Asp364, and Glu366 each contribute to the Zn(2+) site. Asp305 and Asp364 together coordinate substrate. Asp364 and Glu366 together coordinate Mg(2+). Arg368 is a catalytic residue. Residue Lys455 is modified to N6-acetyllysine; alternate. Lys455 carries the post-translational modification N6-succinyllysine; alternate. An N6-succinyllysine modification is found at Lys476. Residue Lys489 is modified to N6-acetyllysine; alternate. Lys489 carries the N6-succinyllysine; alternate modification.

The protein belongs to the peptidase M17 family. In terms of assembly, homohexamer. It depends on Zn(2+) as a cofactor. Requires Mn(2+) as cofactor.

It localises to the cytoplasm. It catalyses the reaction Release of an N-terminal amino acid, Xaa-|-Yaa-, in which Xaa is preferably Leu, but may be other amino acids including Pro although not Arg or Lys, and Yaa may be Pro. Amino acid amides and methyl esters are also readily hydrolyzed, but rates on arylamides are exceedingly low.. The catalysed reaction is an S-substituted L-cysteinylglycine + H2O = an S-substituted L-cysteine + glycine. It carries out the reaction L-cysteinylglycine + H2O = L-cysteine + glycine. The enzyme catalyses S-benzyl-L-cysteinylglycine + H2O = S-benzyl-L-cysteine + glycine. It catalyses the reaction Release of N-terminal proline from a peptide.. Its function is as follows. Cytosolic metallopeptidase that catalyzes the removal of unsubstituted N-terminal hydrophobic amino acids from various peptides. The presence of Zn(2+) ions is essential for the peptidase activity, and the association with other cofactors can modulate the substrate spectificity of the enzyme. For instance, in the presence of Mn(2+), it displays a specific Cys-Gly hydrolyzing activity of Cys-Gly-S-conjugates. Involved in the metabolism of glutathione and in the degradation of glutathione S-conjugates, which may play a role in the control of the cell redox status. This Sus scrofa (Pig) protein is Cytosol aminopeptidase.